We begin with the raw amino-acid sequence, 341 residues long: L-threonine 3-dehydrogenase (341 aa).

Cysteine 38 serves as a coordination point for Zn(2+). Active-site charge relay system residues include threonine 40 and histidine 43. The Zn(2+) site is built by histidine 63, glutamate 64, cysteine 93, cysteine 96, cysteine 99, and cysteine 107. Residues isoleucine 175, aspartate 195, arginine 200, 262–264 (LGI), and 286–287 (IY) each bind NAD(+).

Belongs to the zinc-containing alcohol dehydrogenase family. As to quaternary structure, homotetramer. Requires Zn(2+) as cofactor.

It is found in the cytoplasm. The catalysed reaction is L-threonine + NAD(+) = (2S)-2-amino-3-oxobutanoate + NADH + H(+). It participates in amino-acid degradation; L-threonine degradation via oxydo-reductase pathway; glycine from L-threonine: step 1/2. Functionally, catalyzes the NAD(+)-dependent oxidation of L-threonine to 2-amino-3-ketobutyrate. The polypeptide is L-threonine 3-dehydrogenase (Edwardsiella ictaluri (strain 93-146)).